The following is a 316-amino-acid chain: ATP synthase gamma chain (316 aa).

Belongs to the ATPase gamma chain family. As to quaternary structure, F-type ATPases have 2 components, CF(1) - the catalytic core - and CF(0) - the membrane proton channel. CF(1) has five subunits: alpha(3), beta(3), gamma(1), delta(1), epsilon(1). CF(0) has three main subunits: a, b and c.

The protein localises to the cellular thylakoid membrane. In terms of biological role, produces ATP from ADP in the presence of a proton gradient across the membrane. The gamma chain is believed to be important in regulating ATPase activity and the flow of protons through the CF(0) complex. This is ATP synthase gamma chain from Synechococcus sp. (strain WH7803).